The primary structure comprises 51 residues: Large ribosomal subunit protein eL39x (51 aa).

Belongs to the eukaryotic ribosomal protein eL39 family.

This Oryza sativa subsp. japonica (Rice) protein is Large ribosomal subunit protein eL39x (RPL39C).